The following is a 491-amino-acid chain: Ketol-acid reductoisomerase (NADP(+)) (491 aa).

Residues 14 to 208 (LKHLGKCRFM…GSHRAGVLES (195 aa)) form the KARI N-terminal Rossmann domain. NADP(+) contacts are provided by residues 45–48 (CGSQ), R68, and S78. H132 is a catalytic residue. Position 158 (G158) interacts with NADP(+). KARI C-terminal knotted domains lie at 209–344 (SFVA…QAPN) and 345–485 (YQQE…MQNM). Mg(2+)-binding residues include D217, E221, E389, and E393. Residue S414 coordinates substrate.

This sequence belongs to the ketol-acid reductoisomerase family. Mg(2+) serves as cofactor.

It carries out the reaction (2R)-2,3-dihydroxy-3-methylbutanoate + NADP(+) = (2S)-2-acetolactate + NADPH + H(+). The catalysed reaction is (2R,3R)-2,3-dihydroxy-3-methylpentanoate + NADP(+) = (S)-2-ethyl-2-hydroxy-3-oxobutanoate + NADPH + H(+). Its pathway is amino-acid biosynthesis; L-isoleucine biosynthesis; L-isoleucine from 2-oxobutanoate: step 2/4. It participates in amino-acid biosynthesis; L-valine biosynthesis; L-valine from pyruvate: step 2/4. In terms of biological role, involved in the biosynthesis of branched-chain amino acids (BCAA). Catalyzes an alkyl-migration followed by a ketol-acid reduction of (S)-2-acetolactate (S2AL) to yield (R)-2,3-dihydroxy-isovalerate. In the isomerase reaction, S2AL is rearranged via a Mg-dependent methyl migration to produce 3-hydroxy-3-methyl-2-ketobutyrate (HMKB). In the reductase reaction, this 2-ketoacid undergoes a metal-dependent reduction by NADPH to yield (R)-2,3-dihydroxy-isovalerate. This Blochmanniella pennsylvanica (strain BPEN) protein is Ketol-acid reductoisomerase (NADP(+)).